The sequence spans 332 residues: GTP 3',8-cyclase (332 aa).

One can recognise a Radical SAM core domain in the interval 9–220 (RFARKVDYLR…DQVRERIAER (212 aa)). Position 18 (Arg18) interacts with GTP. 2 residues coordinate [4Fe-4S] cluster: Cys25 and Cys29. Residue Tyr31 coordinates S-adenosyl-L-methionine. Cys32 contacts [4Fe-4S] cluster. Residue Arg67 participates in GTP binding. S-adenosyl-L-methionine is bound at residue Gly71. Thr98 provides a ligand contact to GTP. Ser122 lines the S-adenosyl-L-methionine pocket. Lys159 provides a ligand contact to GTP. Met193 contributes to the S-adenosyl-L-methionine binding site. 2 residues coordinate [4Fe-4S] cluster: Cys258 and Cys261. 263–265 (RVR) contributes to the GTP binding site. Residue Cys275 participates in [4Fe-4S] cluster binding.

Belongs to the radical SAM superfamily. MoaA family. As to quaternary structure, monomer and homodimer. The cofactor is [4Fe-4S] cluster.

It carries out the reaction GTP + AH2 + S-adenosyl-L-methionine = (8S)-3',8-cyclo-7,8-dihydroguanosine 5'-triphosphate + 5'-deoxyadenosine + L-methionine + A + H(+). It participates in cofactor biosynthesis; molybdopterin biosynthesis. Functionally, catalyzes the cyclization of GTP to (8S)-3',8-cyclo-7,8-dihydroguanosine 5'-triphosphate. The sequence is that of GTP 3',8-cyclase from Pseudomonas savastanoi pv. phaseolicola (strain 1448A / Race 6) (Pseudomonas syringae pv. phaseolicola (strain 1448A / Race 6)).